A 73-amino-acid polypeptide reads, in one-letter code: U-scoloptoxin(15)-Sm3a (73 aa).

Positions 1-23 (MERKVFLLLFVIVLLTLPGFMSA) are cleaved as a signal peptide.

The protein belongs to the scoloptoxin-15 family. Contains 2 disulfide bonds. Expressed by the venom gland.

Its subcellular location is the secreted. The polypeptide is U-scoloptoxin(15)-Sm3a (Scolopendra morsitans (Tanzanian blue ringleg centipede)).